The following is a 519-amino-acid chain: uncharacterized protein (519 aa).

11 helical membrane-spanning segments follow: residues 52–72 (IYFLILLYLIQGVPMGLVRGS), 86–106 (LATYSLAAYPYSLKVLWSPIV), 119–139 (TWVVPCMLLISSTLLLFSYNV), 156–176 (WSFLLVFVCATQDIAVDGWSL), 199–219 (FFLSFTILLVFTSPEFANTFI), 231–251 (LSGYIKFWAYFTFIASVLVCF), 313–333 (MLSLIILINFPLGLALGVYTG), 343–363 (IWLKGYWGRVVSILLNTILVY), 374–394 (VFFPIFLCYTLNASFSTIQFV), 408–430 (IGGTYMTILNTLSNLGGSWPQYV), and 477–497 (TSIVGIFLAISICVSLITPVV).

It is found in the membrane. This is an uncharacterized protein from Schizosaccharomyces pombe (strain 972 / ATCC 24843) (Fission yeast).